The sequence spans 221 residues: MTIKAILTDIEGAAGPASFLKDILLPYAREHLGAFIAAHAEDDGIEEALEEAGRLMGGFSLKPDEAEALLQRWMKQGRNPTPLKIIQGRIWQQGYEAGAFTAEIFPDVAPSLGAWKNAGIRLFTYSSSSELAQRLWLGSAGAEVFEGFFDTRVGQKLEEESYKAIAEQLALPAAEILVLSGNEDELDAAKAAGLATALIAREGGGGGNHPVAADFASVTIG.

The protein belongs to the HAD-like hydrolase superfamily. MasA/MtnC family. In terms of assembly, monomer. Mg(2+) is required as a cofactor.

The enzyme catalyses 5-methylsulfanyl-2,3-dioxopentyl phosphate + H2O = 1,2-dihydroxy-5-(methylsulfanyl)pent-1-en-3-one + phosphate. The protein operates within amino-acid biosynthesis; L-methionine biosynthesis via salvage pathway; L-methionine from S-methyl-5-thio-alpha-D-ribose 1-phosphate: step 3/6. It functions in the pathway amino-acid biosynthesis; L-methionine biosynthesis via salvage pathway; L-methionine from S-methyl-5-thio-alpha-D-ribose 1-phosphate: step 4/6. Its function is as follows. Bifunctional enzyme that catalyzes the enolization of 2,3-diketo-5-methylthiopentyl-1-phosphate (DK-MTP-1-P) into the intermediate 2-hydroxy-3-keto-5-methylthiopentenyl-1-phosphate (HK-MTPenyl-1-P), which is then dephosphorylated to form the acireductone 1,2-dihydroxy-3-keto-5-methylthiopentene (DHK-MTPene). This is Enolase-phosphatase E1 from Xanthobacter autotrophicus (strain ATCC BAA-1158 / Py2).